The primary structure comprises 1041 residues: Pre-mRNA-splicing factor ATP-dependent RNA helicase DHX16 (1041 aa).

Disordered regions lie at residues 101–207 (EDSE…AYEE) and 371–391 (LQGD…QKES). Residues serine 103, serine 106, and serine 107 each carry the phosphoserine modification. Residues 119–130 (QKKRKKRKHLRK) show a composition bias toward basic residues. At serine 160 the chain carries Phosphoserine. Residues 166–207 (RTERERLQDLEERDAFAERVRQRDKDRTRNVLERSDKKAYEE) show a composition bias toward basic and acidic residues. Residues 381–391 (PTSTQAQQKES) are compositionally biased toward polar residues. The Helicase ATP-binding domain maps to 409–573 (LAAIANHQVL…FDDAPVFRIP (165 aa)). 422–429 (GETGSGKT) lines the ATP pocket. The DEAH box signature appears at 520–523 (DEAH). Positions 598–771 (SVLQIHVTQP…NVVLLLKSLG (174 aa)) constitute a Helicase C-terminal domain. At threonine 712 the chain carries Phosphothreonine.

The protein belongs to the DEAD box helicase family. DEAH subfamily. DDX16/PRP8 sub-subfamily. In terms of assembly, component of pre-catalytic spliceosome complexes. Component of the minor spliceosome, which splices U12-type introns. Interacts with GPKOW. Interacts with TRIM6. Interacts with RIGI. Expressed in the spleen, thyroid and testis. Also expressed in the brain and cerebellum.

It is found in the nucleus. The protein resides in the nucleoplasm. It localises to the cytoplasm. It catalyses the reaction ATP + H2O = ADP + phosphate + H(+). Functionally, required for pre-mRNA splicing as a component of the spliceosome. Contributes to pre-mRNA splicing after spliceosome formation and prior to the first transesterification reaction. As a component of the minor spliceosome, involved in the splicing of U12-type introns in pre-mRNAs. Also plays a role in innate antiviral response by acting as a pattern recognition receptor sensing splicing signals in viral RNA. Mechanistically, TRIM6 promotes the interaction between unanchored 'Lys-48'-polyubiquitin chains and DHX16, leading to DHX16 interaction with RIGI and ssRNA to amplify RIGI-dependent innate antiviral immune responses. The chain is Pre-mRNA-splicing factor ATP-dependent RNA helicase DHX16 (DHX16) from Homo sapiens (Human).